A 123-amino-acid chain; its full sequence is Small ribosomal subunit protein uS13 (123 aa).

The segment at 97-123 (PCRGQRTHTNSRTRKGPRRGVMAKKKK) is disordered.

It belongs to the universal ribosomal protein uS13 family. In terms of assembly, part of the 30S ribosomal subunit. Forms a loose heterodimer with protein S19. Forms two bridges to the 50S subunit in the 70S ribosome.

Functionally, located at the top of the head of the 30S subunit, it contacts several helices of the 16S rRNA. In the 70S ribosome it contacts the 23S rRNA (bridge B1a) and protein L5 of the 50S subunit (bridge B1b), connecting the 2 subunits; these bridges are implicated in subunit movement. Contacts the tRNAs in the A and P-sites. The protein is Small ribosomal subunit protein uS13 of Solidesulfovibrio magneticus (strain ATCC 700980 / DSM 13731 / RS-1) (Desulfovibrio magneticus).